The following is a 432-amino-acid chain: Glutamate-1-semialdehyde 2,1-aminomutase (432 aa).

K265 is modified (N6-(pyridoxal phosphate)lysine).

The protein belongs to the class-III pyridoxal-phosphate-dependent aminotransferase family. HemL subfamily. Homodimer. Requires pyridoxal 5'-phosphate as cofactor.

It is found in the cytoplasm. It carries out the reaction (S)-4-amino-5-oxopentanoate = 5-aminolevulinate. The protein operates within porphyrin-containing compound metabolism; protoporphyrin-IX biosynthesis; 5-aminolevulinate from L-glutamyl-tRNA(Glu): step 2/2. The protein is Glutamate-1-semialdehyde 2,1-aminomutase of Vibrio cholerae serotype O1 (strain ATCC 39541 / Classical Ogawa 395 / O395).